The sequence spans 487 residues: Serine/threonine-protein kinase 4 (487 aa).

N-acetylmethionine is present on Met1. Residue Thr3 is modified to Phosphothreonine. One can recognise a Protein kinase domain in the interval 30–281 (FDVLEKLGEG…ATQLLQHPFV (252 aa)). Residues 36-44 (LGEGSYGSV) and Lys59 each bind ATP. Catalysis depends on Asp149, which acts as the Proton acceptor. Position 183 is a phosphothreonine; by autocatalysis (Thr183). Ser265 carries the phosphoserine modification. A coiled-coil region spans residues 290–310 (LRDLINEAMDVKLKRQESQQR). Basic and acidic residues predominate over residues 303–312 (KRQESQQREV). Residues 303–332 (KRQESQQREVDQDDEENSEEDEMDSGTMVR) form a disordered region. The span at 313–326 (DQDDEENSEEDEMD) shows a compositional bias: acidic residues. Residue Ser320 is modified to Phosphoserine. 2 positions are modified to phosphothreonine: Thr340 and Thr367. The residue at position 387 (Thr387) is a Phosphothreonine; by PKB/AKT1. A phosphoserine mark is found at Ser410 and Ser414. The residue at position 433 (Tyr433) is a Phosphotyrosine. One can recognise an SARAH domain in the interval 433–480 (YEFLKSWTVEDLQKRLLALDPMMEQEIEEIRQKYQSKRQPILDAIEAK).

This sequence belongs to the protein kinase superfamily. STE Ser/Thr protein kinase family. STE20 subfamily. In terms of assembly, homodimer; mediated via the coiled-coil region. Interacts with NORE1, which inhibits autoactivation. Interacts with and stabilizes SAV1. Interacts with RASSF1. Interacts with FOXO3. Interacts with RASSF2 (via SARAH domain). Interacts with AR, PKB/AKT1, TNNI3 and SIRT1. Interacts with DLG5 (via PDZ domain 3). Interacts with MARK3 and SCRIB in the presence of DLG5. Mg(2+) serves as cofactor. In terms of processing, autophosphorylated on serine and threonine residues. Phosphorylation at Thr-387 by PKB/AKT1, leads to inhibition of its: kinase activity, nuclear translocation and autophosphorylation at Thr-183. It also diminishes its cleavage by caspases and its ability to phosphorylate FOXO3. Post-translationally, proteolytically cleaved by caspase-3 during apoptosis at Asp-326 and Asp-349 resulting in a 37 kDa or a 39 kDa subunit respectively. The 39 kDa subunit is further cleaved into the 37 kDa form. Proteolytic cleavage results in kinase activation and nuclear translocation of the truncated form (MST1/N). It is less likely that cleavage at Asp-349 is a prerequisite for activation as this site is not conserved in the murine ortholog.

The protein localises to the cytoplasm. Its subcellular location is the nucleus. It catalyses the reaction L-seryl-[protein] + ATP = O-phospho-L-seryl-[protein] + ADP + H(+). The catalysed reaction is L-threonyl-[protein] + ATP = O-phospho-L-threonyl-[protein] + ADP + H(+). Inhibited by the C-terminal non-catalytic region. Activated by caspase-cleavage. Full activation also requires homodimerization and autophosphorylation of Thr-183. Activated by RASSF1 which acts by preventing its dephosphorylation. Its function is as follows. Stress-activated, pro-apoptotic kinase which, following caspase-cleavage, enters the nucleus and induces chromatin condensation followed by internucleosomal DNA fragmentation. Key component of the Hippo signaling pathway which plays a pivotal role in organ size control and tumor suppression by restricting proliferation and promoting apoptosis. The core of this pathway is composed of a kinase cascade wherein STK3/MST2 and STK4/MST1, in complex with its regulatory protein SAV1, phosphorylates and activates LATS1/2 in complex with its regulatory protein MOB1, which in turn phosphorylates and inactivates YAP1 oncoprotein and WWTR1/TAZ. Phosphorylation of YAP1 by LATS2 inhibits its translocation into the nucleus to regulate cellular genes important for cell proliferation, cell death, and cell migration. STK3/MST2 and STK4/MST1 are required to repress proliferation of mature hepatocytes, to prevent activation of facultative adult liver stem cells (oval cells), and to inhibit tumor formation. Phosphorylates 'Ser-14' of histone H2B (H2BS14ph) during apoptosis. Phosphorylates FOXO3 upon oxidative stress, which results in its nuclear translocation and cell death initiation. Phosphorylates MOBKL1A, MOBKL1B and RASSF2. Phosphorylates TNNI3 (cardiac Tn-I) and alters its binding affinity to TNNC1 (cardiac Tn-C) and TNNT2 (cardiac Tn-T). Phosphorylates FOXO1 on 'Ser-212' and regulates its activation and stimulates transcription of PMAIP1 in a FOXO1-dependent manner. Phosphorylates SIRT1 and inhibits SIRT1-mediated p53/TP53 deacetylation, thereby promoting p53/TP53 dependent transcription and apoptosis upon DNA damage. Acts as an inhibitor of PKB/AKT1. Phosphorylates AR on 'Ser-650' and suppresses its activity by intersecting with PKB/AKT1 signaling and antagonizing formation of AR-chromatin complexes. The chain is Serine/threonine-protein kinase 4 (STK4) from Aotus nancymaae (Ma's night monkey).